Reading from the N-terminus, the 507-residue chain is Phytoene dehydrogenase (507 aa).

12 to 45 contributes to the FAD binding site; it reads VVVGAGLAGLAAALHLLGAGRRVTVVEREDVPGG.

The protein belongs to the carotenoid/retinoid oxidoreductase family. The cofactor is FAD.

Its pathway is carotenoid biosynthesis; lycopene biosynthesis. Its function is as follows. This enzyme converts phytoene into zeta-carotene via the intermediary of phytofluene by the symmetrical introduction of two double bonds at the C-11 and C-11' positions of phytoene. This is Phytoene dehydrogenase (crtI) from Streptomyces griseus.